The chain runs to 261 residues: uncharacterized protein (261 aa).

Positions 1-22 (MAETTEPPSDAGTSQADAMALA) are disordered. The chain crosses the membrane as a helical span at residues 107 to 127 (IAMAAAVVIICGFTGLSGYIV).

This sequence to M.tuberculosis Rv1362c.

Its subcellular location is the membrane. This is an uncharacterized protein from Mycobacterium tuberculosis (strain ATCC 25618 / H37Rv).